We begin with the raw amino-acid sequence, 561 residues long: Urocanate hydratase (561 aa).

NAD(+)-binding positions include 52 to 53 (GG), Gln-130, 176 to 178 (GMG), Glu-196, Arg-201, 242 to 243 (NA), 263 to 267 (QTSAH), 273 to 274 (YL), and Tyr-322. The active site involves Cys-410. Position 492 (Gly-492) interacts with NAD(+).

This sequence belongs to the urocanase family. Requires NAD(+) as cofactor.

Its subcellular location is the cytoplasm. The enzyme catalyses 4-imidazolone-5-propanoate = trans-urocanate + H2O. It functions in the pathway amino-acid degradation; L-histidine degradation into L-glutamate; N-formimidoyl-L-glutamate from L-histidine: step 2/3. Its function is as follows. Catalyzes the conversion of urocanate to 4-imidazolone-5-propionate. This is Urocanate hydratase from Salmonella choleraesuis (strain SC-B67).